Reading from the N-terminus, the 120-residue chain is Large ribosomal subunit protein bL20 (120 aa).

This sequence belongs to the bacterial ribosomal protein bL20 family.

Functionally, binds directly to 23S ribosomal RNA and is necessary for the in vitro assembly process of the 50S ribosomal subunit. It is not involved in the protein synthesizing functions of that subunit. The polypeptide is Large ribosomal subunit protein bL20 (Methylacidiphilum infernorum (isolate V4) (Methylokorus infernorum (strain V4))).